Reading from the N-terminus, the 602-residue chain is Type II restriction enzyme StsI (602 aa).

It carries out the reaction Endonucleolytic cleavage of DNA to give specific double-stranded fragments with terminal 5'-phosphates.. Functionally, an S subtype restriction enzyme that recognizes the double-stranded sequences 5'-GGATG-3' and 3'-CATCC-5' and cleaves respectively 15 bases after G-1 and 14 bases before C-1. This chain is Type II restriction enzyme StsI (stsIR), found in Streptococcus sanguinis.